The chain runs to 468 residues: Glutamate--tRNA ligase 2 (468 aa).

Residues 13–23 (PSPTGYLHIGG) carry the 'HIGH' region motif. The 'KMSKS' region motif lies at 241-245 (KLSKR). Residue Lys244 coordinates ATP.

Belongs to the class-I aminoacyl-tRNA synthetase family. Glutamate--tRNA ligase type 1 subfamily. As to quaternary structure, monomer.

It is found in the cytoplasm. It carries out the reaction tRNA(Glu) + L-glutamate + ATP = L-glutamyl-tRNA(Glu) + AMP + diphosphate. In terms of biological role, catalyzes the attachment of glutamate to tRNA(Glu) in a two-step reaction: glutamate is first activated by ATP to form Glu-AMP and then transferred to the acceptor end of tRNA(Glu). In Paracoccus denitrificans (strain Pd 1222), this protein is Glutamate--tRNA ligase 2.